Consider the following 155-residue polypeptide: 17.6 kDa class II heat shock protein (155 aa).

Residues 38–155 (DAKAMAATPA…KPKTIQVQVA (118 aa)) form the sHSP domain.

Belongs to the small heat shock protein (HSP20) family. As to quaternary structure, may form oligomeric structures.

The protein localises to the cytoplasm. This chain is 17.6 kDa class II heat shock protein (HSP17.6), found in Arabidopsis thaliana (Mouse-ear cress).